Reading from the N-terminus, the 467-residue chain is Light-independent protochlorophyllide reductase subunit N (467 aa).

Positions 22, 47, and 107 each coordinate [4Fe-4S] cluster.

The protein belongs to the BchN/ChlN family. In terms of assembly, protochlorophyllide reductase is composed of three subunits; ChlL, ChlN and ChlB. Forms a heterotetramer of two ChlB and two ChlN subunits. It depends on [4Fe-4S] cluster as a cofactor.

Its subcellular location is the plastid. It is found in the chloroplast. The enzyme catalyses chlorophyllide a + oxidized 2[4Fe-4S]-[ferredoxin] + 2 ADP + 2 phosphate = protochlorophyllide a + reduced 2[4Fe-4S]-[ferredoxin] + 2 ATP + 2 H2O. Its pathway is porphyrin-containing compound metabolism; chlorophyll biosynthesis (light-independent). Its function is as follows. Component of the dark-operative protochlorophyllide reductase (DPOR) that uses Mg-ATP and reduced ferredoxin to reduce ring D of protochlorophyllide (Pchlide) to form chlorophyllide a (Chlide). This reaction is light-independent. The NB-protein (ChlN-ChlB) is the catalytic component of the complex. The polypeptide is Light-independent protochlorophyllide reductase subunit N (Chara vulgaris (Common stonewort)).